The chain runs to 91 residues: Molybdopterin synthase sulfur carrier subunit (91 aa).

G91 is subject to 1-thioglycine; alternate. At G91 the chain carries Glycyl adenylate; alternate.

It belongs to the MoaD family. MOCS2A subfamily. In terms of assembly, heterotetramer; composed of 2 small (MOCS2A) and 2 large (MOCS2B) subunits. In terms of processing, C-terminal thiocarboxylation occurs in 2 steps, it is first acyl-adenylated (-COAMP) via the hesA/moeB/thiF part of uba4, then thiocarboxylated (-COSH) via the rhodanese domain of uba4.

It localises to the cytoplasm. It participates in cofactor biosynthesis; molybdopterin biosynthesis. Acts as a sulfur carrier required for molybdopterin biosynthesis. Component of the molybdopterin synthase complex that catalyzes the conversion of precursor Z into molybdopterin by mediating the incorporation of 2 sulfur atoms into precursor Z to generate a dithiolene group. In the complex, serves as sulfur donor by being thiocarboxylated (-COSH) at its C-terminus by uba4. After interaction with MOCS2B, the sulfur is then transferred to precursor Z to form molybdopterin. This Emericella nidulans (strain FGSC A4 / ATCC 38163 / CBS 112.46 / NRRL 194 / M139) (Aspergillus nidulans) protein is Molybdopterin synthase sulfur carrier subunit.